The following is a 229-amino-acid chain: All-trans retinoic acid-induced differentiation factor (229 aa).

Positions M1 to A30 are cleaved as a signal peptide. Over L31 to S199 the chain is Extracellular. N44, N79, N157, and N168 each carry an N-linked (GlcNAc...) asparagine glycan. In terms of domain architecture, EGF-like spans Q152–M193. 3 disulfide bridges follow: C156-C171, C165-C181, and C183-C192. Residues L200–A220 form a helical membrane-spanning segment. Residues T221 to S229 are Cytoplasmic-facing.

As to quaternary structure, interacts with NELL1; the interaction promotes osteoblastic differentiation and mineralization. Interacts with SLC37A3; the interaction is direct and both proteins are mutually dependent for their stability. Weakly expressed in hematopoietic cell lines.

It is found in the nucleus envelope. The protein resides in the cell membrane. Its subcellular location is the lysosome membrane. In terms of biological role, promotes osteoblast cell differentiation and terminal mineralization. Plays a role in inducing the cell cycle arrest via inhibiting CCND1 expression in all-trans-retinoic acid (ATRA) signal pathway. In osteoclasts, forms a transporter complex with ATRAID for nitrogen-containing-bisphophonates (N-BPs) required for releasing N-BP molecules that have trafficked to lysosomes through fluid-phase endocytosis into the cytosol. In Homo sapiens (Human), this protein is All-trans retinoic acid-induced differentiation factor.